Consider the following 94-residue polypeptide: Large ribosomal subunit protein bL25 (94 aa).

This sequence belongs to the bacterial ribosomal protein bL25 family. In terms of assembly, part of the 50S ribosomal subunit; part of the 5S rRNA/L5/L18/L25 subcomplex. Contacts the 5S rRNA. Binds to the 5S rRNA independently of L5 and L18.

Functionally, this is one of the proteins that binds to the 5S RNA in the ribosome where it forms part of the central protuberance. In Salmonella gallinarum (strain 287/91 / NCTC 13346), this protein is Large ribosomal subunit protein bL25.